Here is a 518-residue protein sequence, read N- to C-terminus: WEB family protein At2g40480 (518 aa).

Coiled coils occupy residues Asp-95–Glu-141 and Asp-188–Thr-219. A disordered region spans residues Asn-303–Asp-337. Residues Leu-328–Asp-337 are compositionally biased toward basic and acidic residues. Positions Ile-344 to Lys-375 form a coiled coil.

It belongs to the WEB family.

The protein is WEB family protein At2g40480 of Arabidopsis thaliana (Mouse-ear cress).